The sequence spans 309 residues: Protease HtpX homolog (309 aa).

A run of 2 helical transmembrane segments spans residues 7–27 and 29–49; these read TTVLLAAMTALMMIIGQMLGG and QGMMIALIFAGVMNFASYWYS. A Zn(2+)-binding site is contributed by histidine 131. Glutamate 132 is an active-site residue. Position 135 (histidine 135) interacts with Zn(2+). Transmembrane regions (helical) follow at residues 141-161 and 182-202; these read ILIGTIAATMAGAIMMLASMA and IGLIALSIIAPMAAMVIQMAI. Glutamate 207 provides a ligand contact to Zn(2+). Residues 278–309 form a disordered region; it reads RHGSDSGTGNRDSSIRRRNMNTEAKAAWDRLR.

It belongs to the peptidase M48B family. Zn(2+) serves as cofactor.

It is found in the cell inner membrane. The chain is Protease HtpX homolog from Desulforapulum autotrophicum (strain ATCC 43914 / DSM 3382 / VKM B-1955 / HRM2) (Desulfobacterium autotrophicum).